The sequence spans 147 residues: MNQEELEKCIDAAQNSQQYAHCPYSHFRIGAALLTSCGKIFTGVNVENSSYGLTICAERTAYTKAVSEGYKSFKGIVVASDLKDRFITPCGACRQFGVEFGDFEVVCVKPDRSTFKSSTHKLLPGLFSQEDLIAKAEQDERECKAQN.

The region spanning 4-130 (EELEKCIDAA…KLLPGLFSQE (127 aa)) is the CMP/dCMP-type deaminase domain. 45 to 51 (NVENSSY) lines the substrate pocket. Cysteine 56 provides a ligand contact to Zn(2+). The active-site Proton donor is the glutamate 58. Positions 90 and 93 each coordinate Zn(2+).

It belongs to the cytidine and deoxycytidylate deaminase family. Requires Zn(2+) as cofactor.

It catalyses the reaction cytidine + H2O + H(+) = uridine + NH4(+). The enzyme catalyses 2'-deoxycytidine + H2O + H(+) = 2'-deoxyuridine + NH4(+). This enzyme scavenges exogenous and endogenous cytidine and 2'-deoxycytidine for UMP synthesis. In Dictyostelium discoideum (Social amoeba), this protein is Probable cytidine deaminase (cda).